The chain runs to 393 residues: Lipid-A-disaccharide synthase (393 aa).

Belongs to the LpxB family.

The catalysed reaction is a lipid X + a UDP-2-N,3-O-bis[(3R)-3-hydroxyacyl]-alpha-D-glucosamine = a lipid A disaccharide + UDP + H(+). It participates in bacterial outer membrane biogenesis; LPS lipid A biosynthesis. In terms of biological role, condensation of UDP-2,3-diacylglucosamine and 2,3-diacylglucosamine-1-phosphate to form lipid A disaccharide, a precursor of lipid A, a phosphorylated glycolipid that anchors the lipopolysaccharide to the outer membrane of the cell. In Actinobacillus pleuropneumoniae serotype 3 (strain JL03), this protein is Lipid-A-disaccharide synthase.